The chain runs to 801 residues: MKPQLLTPLRRRPWTCRQCLQRLQRLQQQTRRSFETAASPAPGHTQVDYIPADASQSKKVDDETIRRVFDSQHFWREFSQRRSTQSKPTGLVQNQYLTSPDGFRTFANVSLQKCQAIVSKVLAASTLEEYRTMARDLDRLSDLLCRVIDLSDFIRVIHPDPRVQEAATQAYALMFEYMNVLNTTTGLNDQLKKAVANPEVASHWTEEEKIVAQILIKDFSNSAILMPPQERQRFVNLSNDISQLGSSFVNSPEPAKSQVVVNANSLRGLDPMLVQQIKRWNRTASVPTTGMIPRLALRSVHDESVRREVYLASRTSSARQLHRLEELLLKRAELAKLSGYSSFGHMTLSDKMAKSPEAVSNFLTSLVDSNRTLVREELLQLRNMKGSPLQPWDHAYYVHKRVMQYSQSRRSRELSAVPEFFSLGTVMQGLSRLFDRLYGVRLVPQEAAPGETWNPDVRRLDVVDEADRHIAVIYCDLFSRPNKHPNPAHFTLRCSREISATEVAECASLDQSSHPNDGMATAVDPTTKTLRQLPTIALVCDFAEPAAHGGRPSLLSEHSVRTLFHEMGHALHSILGQTRLQSISGTRCATDFAELPSVLMEHFATAPSVLSLYARHWETDEPLSERMIQSMERDRTAHGSIYGAVENEAQILMALVDQEYHSRPADGGRIDSTALYHEVAQRHSSLPDPAETAPPTSWQGFFGHLYGYGATYYSYIFDRAIANKLWADVFGAGRAAVDRAAGERYKTEVLRWGGGRNGWQCVAGVLGPSNASNADGRLVEGGDEAMREVGRWGLGRDGVSG.

A mitochondrion-targeting transit peptide spans 1–41 (MKPQLLTPLRRRPWTCRQCLQRLQRLQQQTRRSFETAASPA). The segment at 31–54 (RRSFETAASPAPGHTQVDYIPADA) is disordered. Residue His-565 coordinates Zn(2+). The active site involves Glu-566. Residues His-569 and His-572 each coordinate Zn(2+).

This sequence belongs to the peptidase M3 family. Zn(2+) is required as a cofactor.

The protein localises to the mitochondrion matrix. The catalysed reaction is Release of an N-terminal octapeptide as second stage of processing of some proteins imported into the mitochondrion.. In terms of biological role, cleaves proteins, imported into the mitochondrion, to their mature size. While most mitochondrial precursor proteins are processed to the mature form in one step by mitochondrial processing peptidase (MPP), the sequential cleavage by MIP of an octapeptide after initial processing by MPP is a required step for a subgroup of nuclear-encoded precursor proteins destined for the matrix or the inner membrane. In Aspergillus clavatus (strain ATCC 1007 / CBS 513.65 / DSM 816 / NCTC 3887 / NRRL 1 / QM 1276 / 107), this protein is Mitochondrial intermediate peptidase (oct1).